A 556-amino-acid chain; its full sequence is Outer spore wall assembly protein SHE10 (556 aa).

The signal sequence occupies residues 1–21 (MRFLTKFLLFLATVYFGLKYA). Residues 135–201 (NKNLKRHVER…KQITSDVKKT (67 aa)) adopt a coiled-coil conformation. Residues 190-208 (EAKQITSDVKKTVESEIKK) show a composition bias toward basic and acidic residues. Disordered stretches follow at residues 190–263 (EAKQ…EDIT) and 534–556 (RKEAGEVNESSEEEQIVEEPISA). A compositionally biased stretch (low complexity) spans 220 to 244 (IVSTSTIVKTITRTRHSSSSTTSTK). Residues 245 to 256 (SAEETSEKNLET) are compositionally biased toward basic and acidic residues. A coiled-coil region spans residues 481–547 (KISEFKLLLD…GEVNESSEEE (67 aa)).

It belongs to the SHE10 family. Component of the mitochondria-localized RNase mitochondrial RNA-processing (RNase MRP) composed of one single RNA encoded by the NME1 gene and at least 31 proteins. Absent in the nucleus-localized RNase MRP (NuMRP).

Its subcellular location is the mitochondrion. In terms of biological role, involved in spore wall assembly. May be a component of the mitochondrial RNase MRP (MtMRP), a ribonucleoprotein endoribonuclease involved in the cleaving RNA transcripts to generate primers for DNA replication in mitochondria. This chain is Outer spore wall assembly protein SHE10, found in Candida glabrata (strain ATCC 2001 / BCRC 20586 / JCM 3761 / NBRC 0622 / NRRL Y-65 / CBS 138) (Yeast).